Consider the following 232-residue polypeptide: Large ribosomal subunit protein uL1 (232 aa).

This sequence belongs to the universal ribosomal protein uL1 family. Part of the 50S ribosomal subunit.

In terms of biological role, binds directly to 23S rRNA. The L1 stalk is quite mobile in the ribosome, and is involved in E site tRNA release. Functionally, protein L1 is also a translational repressor protein, it controls the translation of the L11 operon by binding to its mRNA. The chain is Large ribosomal subunit protein uL1 from Bacteroides fragilis (strain ATCC 25285 / DSM 2151 / CCUG 4856 / JCM 11019 / LMG 10263 / NCTC 9343 / Onslow / VPI 2553 / EN-2).